The sequence spans 741 residues: Interleukin-17 receptor D (741 aa).

The N-terminal stretch at Met1–Ala26 is a signal peptide. At Ala27–Arg301 the chain is on the extracellular side. 5 N-linked (GlcNAc...) asparagine glycosylation sites follow: Asn57, Asn82, Asn173, Asn208, and Asn279. A helical transmembrane segment spans residues Ala302–Met322. The Cytoplasmic portion of the chain corresponds to Cys323–Leu741. The region spanning Arg357–Ser510 is the SEFIR domain. Over residues Thr688–Leu703 the composition is skewed to low complexity. The disordered stretch occupies residues Thr688–Pro708.

It is found in the membrane. Functionally, feedback inhibitor of fibroblast growth factor mediated Ras-MAPK signaling and ERK activation. May inhibit FGF-induced FGFR1 tyrosine phosphorylation. Inhibits TGFB-induced epithelial-to-mesenchymal transition in lens epithelial cells. The chain is Interleukin-17 receptor D (IL17RD) from Gallus gallus (Chicken).